The primary structure comprises 207 residues: Killer cell lectin-like receptor subfamily F member 2 (207 aa).

Residues 1–30 lie on the Cytoplasmic side of the membrane; the sequence is MENEDGYMTLSFKNRCKSKQKSKDFSLYPQ. The residue at position 7 (Tyr-7) is a Phosphotyrosine. A helical; Signal-anchor for type II membrane protein membrane pass occupies residues 31 to 51; sequence YYCLLLIFGCIVILIFIMTGI. Topologically, residues 52-207 are extracellular; it reads DLKFWHKKMD…ILTHNGTSGV (156 aa). N-linked (GlcNAc...) asparagine glycosylation is present at Asn-67. Cystine bridges form between Cys-78–Cys-89, Cys-106–Cys-193, and Cys-172–Cys-185. A C-type lectin domain is found at 85-194; it reads NEGKCYWFST…CSSTFKGICQ (110 aa). The N-linked (GlcNAc...) asparagine glycan is linked to Asn-202.

In terms of assembly, homodimer; non-disulfide-linked. Interacts with CLEC2A. N-glycosylated.

It is found in the cell membrane. Functionally, C-type lectin-like receptor involved in natural killer cell mediated cytotoxicity and cytokine secretion in keratinocytes via its interaction with CLEC2A. Triggers degranulation in a SYK-dependent manner and stimulates SYK phosphotyrosinylation without recruiting SYK directly. The sequence is that of Killer cell lectin-like receptor subfamily F member 2 (KLRF2) from Homo sapiens (Human).